Here is a 44-residue protein sequence, read N- to C-terminus: U9-ctenitoxin-Co1a (44 aa).

Cystine bridges form between Cys-3-Cys-17, Cys-10-Cys-23, Cys-16-Cys-33, and Cys-25-Cys-31.

Expressed by the venom gland.

The protein localises to the secreted. Its function is as follows. Insecticidal neurotoxin that reversibly inhibits the N-methyl-D-aspartate (NMDA)-subtype of ionotropic glutamate receptor (GRIN) and inhibits inactivation of insect sodium channels (Nav). In vivo, is highly toxic to insects. This chain is U9-ctenitoxin-Co1a, found in Ctenus ornatus (Brazilian spider).